Reading from the N-terminus, the 527-residue chain is Glutamate--cysteine ligase (527 aa).

The protein belongs to the glutamate--cysteine ligase type 1 family. Type 1 subfamily.

The catalysed reaction is L-cysteine + L-glutamate + ATP = gamma-L-glutamyl-L-cysteine + ADP + phosphate + H(+). The protein operates within sulfur metabolism; glutathione biosynthesis; glutathione from L-cysteine and L-glutamate: step 1/2. This is Glutamate--cysteine ligase from Pseudomonas paraeruginosa (strain DSM 24068 / PA7) (Pseudomonas aeruginosa (strain PA7)).